Consider the following 487-residue polypeptide: Serine/threonine-protein phosphatase 2A activator 1 (487 aa).

2 disordered regions span residues 1 to 28 (MPMI…SSST) and 426 to 487 (GGIQ…PKPE).

The protein belongs to the PTPA-type PPIase family.

The protein localises to the cytoplasm. It localises to the nucleus. The enzyme catalyses [protein]-peptidylproline (omega=180) = [protein]-peptidylproline (omega=0). In terms of biological role, PPIases accelerate the folding of proteins. It catalyzes the cis-trans isomerization of proline imidic peptide bonds in oligopeptides. Acts as a regulatory subunit for PP2A-like phosphatases modulating their activity or substrate specificity, probably by inducing a conformational change in the catalytic subunit, a direct target of the PPIase. Can reactivate inactive phosphatase PP2A-phosphatase methylesterase complexes (PP2Ai) in presence of ATP and Mg(2+) by dissociating the inactive form from the complex. The polypeptide is Serine/threonine-protein phosphatase 2A activator 1 (RRD1) (Mycosarcoma maydis (Corn smut fungus)).